The primary structure comprises 235 residues: Urease accessory protein UreF (235 aa).

This sequence belongs to the UreF family. UreD, UreF and UreG form a complex that acts as a GTP-hydrolysis-dependent molecular chaperone, activating the urease apoprotein by helping to assemble the nickel containing metallocenter of UreC. The UreE protein probably delivers the nickel.

It is found in the cytoplasm. Functionally, required for maturation of urease via the functional incorporation of the urease nickel metallocenter. The protein is Urease accessory protein UreF of Pseudoalteromonas translucida (strain TAC 125).